Consider the following 309-residue polypeptide: Serine/threonine-protein phosphatase PP2A catalytic subunit (309 aa).

D57, H59, D85, and N117 together coordinate Mn(2+). H118 acts as the Proton donor in catalysis. Positions 167 and 241 each coordinate Mn(2+).

It belongs to the PPP phosphatase family. PP-2A subfamily. Requires Mn(2+) as cofactor.

It catalyses the reaction O-phospho-L-seryl-[protein] + H2O = L-seryl-[protein] + phosphate. The catalysed reaction is O-phospho-L-threonyl-[protein] + H2O = L-threonyl-[protein] + phosphate. The polypeptide is Serine/threonine-protein phosphatase PP2A catalytic subunit (Brassica napus (Rape)).